Consider the following 176-residue polypeptide: Ribosome rescue factor SmrB (176 aa).

The Smr domain maps to 97-172 (LDMHGMTQQE…GDGALLVLLS (76 aa)).

It belongs to the SmrB family. As to quaternary structure, associates with collided ribosomes, but not with correctly translating polysomes.

Acts as a ribosome collision sensor. Detects stalled/collided disomes (pairs of ribosomes where the leading ribosome is stalled and a second ribosome has collided with it) and endonucleolytically cleaves mRNA at the 5' boundary of the stalled ribosome. Stalled/collided disomes form a new interface (primarily via the 30S subunits) that binds SmrB. Cleaved mRNA becomes available for tmRNA ligation, leading to ribosomal subunit dissociation and rescue of stalled ribosomes. The polypeptide is Ribosome rescue factor SmrB (Vibrio campbellii (strain ATCC BAA-1116)).